Here is a 735-residue protein sequence, read N- to C-terminus: Transcription initiation factor IIF subunit alpha (735 aa).

Disordered stretches follow at residues 1 to 68 (MSRR…EYAE), 165 to 263 (EYKK…TANL), 297 to 323 (NEPEFEEGTMDPLADVAPDGGGRAKRG), 446 to 465 (KAVADQQAMDEDDRDDNSEV), 471 to 606 (EEFA…HKEP), and 631 to 674 (PEGE…EETP). Residues 33 to 54 (RMRMGQNGSNSSSPGVPNGDNS) are compositionally biased toward low complexity. Basic and acidic residues-rich tracts occupy residues 59-68 (VKKDDPEYAE) and 165-174 (EYKKKAEQER). The span at 175-219 (STPNSGGMNKSGTVSLNNTVKDGSQTPTVDSVTKDNTANGVNSSI) shows a compositional bias: polar residues. Phosphoserine is present on serine 198. Phosphothreonine is present on threonine 200. Over residues 220–238 (PTVTGSSVPPASPTTVSAV) the composition is skewed to low complexity. Over residues 239-263 (ESNGLSNGSTSAANGLDGNASTANL) the composition is skewed to polar residues. 2 stretches are compositionally biased toward acidic residues: residues 453 to 465 (AMDEDDRDDNSEV) and 471 to 480 (EEFADDEEAP). A compositionally biased stretch (basic and acidic residues) spans 487–500 (QENKESEQRIKKEM). Residues 513–522 (APSENEEDEL) are compositionally biased toward acidic residues. A Phosphoserine modification is found at serine 515. Residues 523–536 (FGEKKIDEDGERIK) are compositionally biased toward basic and acidic residues. Serine 560, serine 562, and serine 571 each carry phosphoserine. Positions 564-583 (IENKENESPVKKEEDSDTLS) are enriched in basic and acidic residues. The segment covering 584-595 (KSKRSSPKKQQK) has biased composition (basic residues). Residues 636–654 (NPQTTKAVDSSNNASNTVP) are compositionally biased toward polar residues. Serine 655 is subject to Phosphoserine.

It belongs to the TFIIF alpha subunit family. In terms of assembly, TFIIF is composed of three different subunits: TFG1/RAP74, TFG2/RAP30 and TAF14. In terms of processing, phosphorylated on Ser and other residues by TAF1 and casein kinase II-like kinases.

It localises to the nucleus. Its function is as follows. TFIIF is a general transcription initiation factor that binds to RNA polymerase II. Its functions include the recruitment of RNA polymerase II to the promoter bound DNA-TBP-TFIIB complex, decreasing the affinity of RNA polymerase II for non-specific DNA, allowing for the subsequent recruitment of TFIIE and TFIIH, and facilitating RNA polymerase II elongation. The chain is Transcription initiation factor IIF subunit alpha (TFG1) from Saccharomyces cerevisiae (strain ATCC 204508 / S288c) (Baker's yeast).